The chain runs to 130 residues: Albumin-1 C (130 aa).

Positions 1 to 26 (MASVKLASLIVLFATLGMFLTKNVGA) are cleaved as a signal peptide. Disulfide bonds link cysteine 29/cysteine 46, cysteine 33/cysteine 48, and cysteine 41/cysteine 58. 2 consecutive propeptides follow at residues 64-69 (VFLRTN) and 123-130 (LLKSVSTA).

Post-translationally, the C-terminal glycine may be removed from PA1b. In terms of tissue distribution, major component of both the cotyledons and embryonic axes of mature seeds.

In terms of biological role, PA1b binds to basic 7S globulin (BG) and stimulates its phosphorylation activity. Involved in the signal transduction system to regulate the growth and differentiation as a hormone peptide. Toxic to various insects through binding to a high affinity binding site in the insect gut. This Pisum sativum (Garden pea) protein is Albumin-1 C.